The primary structure comprises 128 residues: Fluoride-specific ion channel FluC (128 aa).

4 helical membrane-spanning segments follow: residues 5 to 25, 35 to 55, 67 to 87, and 96 to 116; these read IVAI…LALA, LGTL…AVVF, LFVI…SVEV, and FGWA…LTAL. Residues Gly75 and Thr78 each coordinate Na(+).

The protein belongs to the fluoride channel Fluc/FEX (TC 1.A.43) family.

The protein resides in the cell inner membrane. The enzyme catalyses fluoride(in) = fluoride(out). Na(+) is not transported, but it plays an essential structural role and its presence is essential for fluoride channel function. In terms of biological role, fluoride-specific ion channel. Important for reducing fluoride concentration in the cell, thus reducing its toxicity. In Burkholderia ambifaria (strain MC40-6), this protein is Fluoride-specific ion channel FluC.